Here is a 544-residue protein sequence, read N- to C-terminus: Serine/threonine-protein kinase bur1 (544 aa).

Residues 25 to 326 form the Protein kinase domain; sequence FEFLGKLGEG…AIDALKHPYF (302 aa). Residues 31–39 and Lys54 each bind ATP; that span reads LGEGTFGEV. Asp155 serves as the catalytic Proton acceptor. The disordered stretch occupies residues 357–544; that stretch reads AAMPPAPAGG…ERVDRGPYRR (188 aa). Over residues 374-403 the composition is skewed to polar residues; that stretch reads GGWSTNSGSRTGAETRNPRISSAARSQGNQ. Basic and acidic residues-rich tracts occupy residues 419–438, 456–466, 488–511, and 532–544; these read RGNE…HRDG, HSDKTGRDRGY, DRNR…DKSH, and NYRE…PYRR.

The protein belongs to the protein kinase superfamily. CMGC Ser/Thr protein kinase family. CDC2/CDKX subfamily.

It is found in the nucleus. It catalyses the reaction L-seryl-[protein] + ATP = O-phospho-L-seryl-[protein] + ADP + H(+). The catalysed reaction is L-threonyl-[protein] + ATP = O-phospho-L-threonyl-[protein] + ADP + H(+). The enzyme catalyses [DNA-directed RNA polymerase] + ATP = phospho-[DNA-directed RNA polymerase] + ADP + H(+). Its function is as follows. Serine/threonine-protein kinase involved in transcription regulation. Phosphorylates the UBC2/RAD6 ubiquitin-conjugating enzyme (E2), leading to monoubiquitination of histone H2B and the silencing of telomeric-associated genes. Also required for histone H3 methylation. Necessary for the recovery from pheromone-induced growth arrest in the cell cycle G1 phase. The polypeptide is Serine/threonine-protein kinase bur1 (ptkA) (Emericella nidulans (strain FGSC A4 / ATCC 38163 / CBS 112.46 / NRRL 194 / M139) (Aspergillus nidulans)).